The chain runs to 349 residues: MDIKNALSRIVGQLDLTTEEMREVMRQIMTGQCSEAQIGAFLMGMRMKSESIDEIVGAVSVMRELAEKVELQSLDGVVDIVGTGGDGANIFNVSTASSFVLAAAGCPVAKHGNRAVSGKSGSADLLEAAGIYLNLTPTQVARCIDSLGIGFMFAQSHHSAMKHAAGPRRELGLRTLFNMLGPLTNPAGVKHQVVGVFAQTLCRPLAEVLQRLGSKHVLVVHSKDGLDEFSLAAPTFVAELKNGEITEYWVEPEDLGMKSQSLHGLAVESPQASLELIRDALGRRKTENGQKAAEMIVLNAGAALYAADHAMSLKAGVELAHDVLHTGLAWEKLQELGAFTAVFKVENEA.

5-phospho-alpha-D-ribose 1-diphosphate is bound by residues G82, 85 to 86 (GD), 92 to 95 (NVST), 110 to 118 (KHGNRAVSG), and S122. Anthranilate is bound at residue G82. S94 serves as a coordination point for Mg(2+). Residue N113 participates in anthranilate binding. R168 is an anthranilate binding site. Residues D227 and E228 each coordinate Mg(2+).

It belongs to the anthranilate phosphoribosyltransferase family. In terms of assembly, homodimer. Mg(2+) serves as cofactor.

The catalysed reaction is N-(5-phospho-beta-D-ribosyl)anthranilate + diphosphate = 5-phospho-alpha-D-ribose 1-diphosphate + anthranilate. Its pathway is amino-acid biosynthesis; L-tryptophan biosynthesis; L-tryptophan from chorismate: step 2/5. Functionally, catalyzes the transfer of the phosphoribosyl group of 5-phosphorylribose-1-pyrophosphate (PRPP) to anthranilate to yield N-(5'-phosphoribosyl)-anthranilate (PRA). This chain is Anthranilate phosphoribosyltransferase, found in Pseudomonas putida (strain ATCC 700007 / DSM 6899 / JCM 31910 / BCRC 17059 / LMG 24140 / F1).